The following is a 255-amino-acid chain: Polycomb group RING finger protein 5 (255 aa).

Residues 18 to 57 form an RING-type zinc finger; that stretch reads CYICKGYLIKPTTVTECLHTFCKTCIVQHFEDSNDCPRCG. The tract at residues 97 to 132 is disordered; the sequence is WKKNKPQENGQDDMSKVDKPKVDEEGDENQDDKDYH. The segment covering 109–119 has biased composition (basic and acidic residues); sequence DMSKVDKPKVD.

Component of a PRC1-like complex that contains PCGF5, RNF2 and UBE2D3. Interacts with RNF2; the interaction is direct. Interacts with CBX6, CBX7 and CBX8. Interacts with AUTS2; the interaction is direct. Identified in a complex that contains AUTS2, PCGF5, CSNK2B and RNF2.

It localises to the nucleus. Its subcellular location is the nucleoplasm. Functionally, component of a Polycomb group (PcG) multiprotein PRC1-like complex, a complex class required to maintain the transcriptionally repressive state of many genes, including Hox genes, throughout development. PcG PRC1 complex acts via chromatin remodeling and modification of histones; it mediates monoubiquitination of histone H2A 'Lys-119', rendering chromatin heritably changed in its expressibility. Within the PRC1-like complex, regulates RNF2 ubiquitin ligase activity. Plays a redundant role with PCGF3 as part of a PRC1-like complex that mediates monoubiquitination of histone H2A 'Lys-119' on the X chromosome and is required for normal silencing of one copy of the X chromosome in XX females. The protein is Polycomb group RING finger protein 5 (PCGF5) of Bos taurus (Bovine).